A 189-amino-acid chain; its full sequence is Potassium-transporting ATPase KdpC subunit (189 aa).

A helical transmembrane segment spans residues 5–25 (LLPALTMLLVFTVITGIVYPL).

This sequence belongs to the KdpC family. In terms of assembly, the system is composed of three essential subunits: KdpA, KdpB and KdpC.

The protein localises to the cell membrane. Functionally, part of the high-affinity ATP-driven potassium transport (or Kdp) system, which catalyzes the hydrolysis of ATP coupled with the electrogenic transport of potassium into the cytoplasm. This subunit acts as a catalytic chaperone that increases the ATP-binding affinity of the ATP-hydrolyzing subunit KdpB by the formation of a transient KdpB/KdpC/ATP ternary complex. This Mycobacterium bovis (strain ATCC BAA-935 / AF2122/97) protein is Potassium-transporting ATPase KdpC subunit.